The primary structure comprises 343 residues: GDSL esterase/lipase EXL4 (343 aa).

The signal sequence occupies residues 1 to 21; that stretch reads MCSKITLVLTLFSSYFISTDA. The N-linked (GlcNAc...) asparagine glycan is linked to Asn-23. Ser-35 functions as the Nucleophile in the catalytic mechanism. Residues Asp-318 and His-321 contribute to the active site.

It belongs to the 'GDSL' lipolytic enzyme family. In terms of tissue distribution, flower buds and pollen.

It localises to the secreted. The protein resides in the extracellular space. Its subcellular location is the extracellular matrix. It is found in the pollen coat. Functionally, required for the formation of pollen coats and male fertility. The polypeptide is GDSL esterase/lipase EXL4 (EXL4) (Arabidopsis thaliana (Mouse-ear cress)).